Consider the following 56-residue polypeptide: Ovomucoid (56 aa).

A Kazal-like domain is found at 6-56 (VDCSEYPKPACTLEYRPLCGSDSKTYANKCNFCNAVVESNGTLTLSHFGKC). Cystine bridges form between Cys-8/Cys-38, Cys-16/Cys-35, and Cys-24/Cys-56. Residue Asn-45 is glycosylated (N-linked (GlcNAc...) asparagine).

It localises to the secreted. The polypeptide is Ovomucoid (Oreortyx pictus (Mountain quail)).